The primary structure comprises 47 residues: Potamin-1 (47 aa).

Disulfide bonds link C3/C40, C6/C24, and C7/C36.

In terms of biological role, inhibitor of serine proteases chymotrypsin, papain and trypsin. Has strong antifungal activity against C.albicans and R.solani. Has antibacterial activity against the Gram-positive bacterium C.michiganense, but lacks antibacterial activity against the Gram-positive bacterium S.aureus. Lacks hemolytic activity against human erythrocytes. This Solanum tuberosum (Potato) protein is Potamin-1.